A 99-amino-acid polypeptide reads, in one-letter code: Transcription factor 1 (99 aa).

May be involved in preference for HM-URA DNA stretches follow at residues 52 to 77 and 90 to 99; these read PVAR…SVGV and EGLKYEDFAK. DNA-binding regions lie at residues phenylalanine 61 and 93–94; that span reads KY.

The protein belongs to the bacterial histone-like protein family. As to quaternary structure, homodimer.

In terms of biological role, selectively binds to and inhibits the transcription of hydroxymethyluracil-(hmUra)-containing DNA, such as SP01 DNA, by RNA polymerase in vitro. In Bacillus phage SP01 (Bacteriophage SP01), this protein is Transcription factor 1 (TF1).